Consider the following 500-residue polypeptide: Putative glucokinase-2 (500 aa).

The residue at position 2 (Ser2) is an N-acetylserine. Ser2 is modified (phosphoserine). A Hexokinase domain is found at 12-498; that stretch reads EALEDAVVEI…SGVGAALCAL (487 aa). A hexokinase small subdomain region spans residues 74–217; it reads NGTERGVLLA…LSMINVVALT (144 aa). ATP is bound at residue Lys110. The tract at residues 159–185 is glucose-binding; the sequence is KMGFTFSYPVDQTSLSSGTLIRWTKSF. Positions 218–487 are hexokinase large subdomain; sequence NDTVGTFLSH…RKIHLRLAKD (270 aa). Phosphoserine is present on Ser470. 487 to 492 is an ATP binding site; that stretch reads DGSGVG.

It belongs to the hexokinase family.

Its subcellular location is the cytoplasm. The enzyme catalyses D-glucose + ATP = D-glucose 6-phosphate + ADP + H(+). Its pathway is carbohydrate degradation; glycolysis; D-glyceraldehyde 3-phosphate and glycerone phosphate from D-glucose: step 1/4. Putative glucokinase involved in phosphorylation of aldohexoses and glucose uptake. Involved in sporulation. Required for the full activation of the early meiotic inducer IME1. In Saccharomyces cerevisiae (strain ATCC 204508 / S288c) (Baker's yeast), this protein is Putative glucokinase-2 (EMI2).